The primary structure comprises 892 residues: Nitrogen assimilation transcription factor nirA (892 aa).

The disordered stretch occupies residues 1–32; the sequence is MGEKLDPELSSDGPHTKSSSKGQGTSTDNAPA. Over residues 16 to 27 the composition is skewed to low complexity; that stretch reads TKSSSKGQGTST. Residues 42–70 constitute a DNA-binding region (zn(2)-C6 fungal-type); it reads CIACRRRKSKCDGNLPSCAACSSVYHTTC. Disordered regions lie at residues 646–714, 731–761, and 842–892; these read GPWD…SGPV, AHNEARQPEPTYLRPVSTSYGPVPSTQSAQE, and PNIP…SFQR. Residues 649-674 are compositionally biased toward low complexity; that stretch reads DQAASPSTTSDSPPSVSSQSVVATTD. 3 stretches are compositionally biased toward polar residues: residues 675-714, 746-761, and 876-892; these read LSQPVSQSAGNQPANPSMGTSPNLTQPVASQYSSTPSGPV, VSTSYGPVPSTQSAQE, and NVNSNQTNMIFPGSFQR.

Its subcellular location is the nucleus. Its function is as follows. Pathway-specific regulatory gene of nitrate assimilation; it activates the transcription of the genes for nitrate and nitrite reductases (niaD and niiA). This Emericella nidulans (strain FGSC A4 / ATCC 38163 / CBS 112.46 / NRRL 194 / M139) (Aspergillus nidulans) protein is Nitrogen assimilation transcription factor nirA (nirA).